Consider the following 154-residue polypeptide: Myoglobin (154 aa).

Positions 2–148 (GLSDGEWQLV…FRNDIAAKYK (147 aa)) constitute a Globin domain. A Phosphoserine modification is found at serine 4. Nitrite is bound at residue histidine 65. O2 is bound at residue histidine 65. Residue threonine 68 is modified to Phosphothreonine. Histidine 94 lines the heme b pocket.

This sequence belongs to the globin family. As to quaternary structure, monomeric.

It localises to the cytoplasm. The protein resides in the sarcoplasm. The enzyme catalyses Fe(III)-heme b-[protein] + nitric oxide + H2O = Fe(II)-heme b-[protein] + nitrite + 2 H(+). The catalysed reaction is H2O2 + AH2 = A + 2 H2O. In terms of biological role, monomeric heme protein which primary function is to store oxygen and facilitate its diffusion within muscle tissues. Reversibly binds oxygen through a pentacoordinated heme iron and enables its timely and efficient release as needed during periods of heightened demand. Depending on the oxidative conditions of tissues and cells, and in addition to its ability to bind oxygen, it also has a nitrite reductase activity whereby it regulates the production of bioactive nitric oxide. Under stress conditions, like hypoxia and anoxia, it also protects cells against reactive oxygen species thanks to its pseudoperoxidase activity. The chain is Myoglobin (MB) from Spalax ehrenbergi (Middle East blind mole rat).